A 199-amino-acid polypeptide reads, in one-letter code: Shikimate kinase (199 aa).

14-19 (GSGKST) contacts ATP. S18 contacts Mg(2+). 3 residues coordinate substrate: D36, R60, and G82. R120 provides a ligand contact to ATP. Substrate is bound at residue R147. The tract at residues 179 to 199 (YVRRAEKNQNSHSQTKKQSRK) is disordered.

This sequence belongs to the shikimate kinase family. As to quaternary structure, monomer. Mg(2+) is required as a cofactor.

It is found in the cytoplasm. It catalyses the reaction shikimate + ATP = 3-phosphoshikimate + ADP + H(+). It participates in metabolic intermediate biosynthesis; chorismate biosynthesis; chorismate from D-erythrose 4-phosphate and phosphoenolpyruvate: step 5/7. Functionally, catalyzes the specific phosphorylation of the 3-hydroxyl group of shikimic acid using ATP as a cosubstrate. The polypeptide is Shikimate kinase (Chlorobium phaeobacteroides (strain BS1)).